Here is a 383-residue protein sequence, read N- to C-terminus: MSKSDYYEALGVARNASDSEIKKAYRRMAMKYHPDRNPGDKEAEARFKEAKEAYEILSDPQKRAAYDQFGHAGVDPSAGMGGAGGPGGPGGPDFADIFSDVFGDIFGGGGRRGGGGRRVFRGADLRYNLELSLEDAVRGTEVQIRVPTQEVCDACDGKGTKEGSQPETCPTCKGHGDVRIQQGFFSVQQTCPRCGGSGSVITDPCRKCGGRGRVQSQKTLSVRVPAGVDTGDRIRLSGEGEPGENGGPPGDLYVQIMVREHEFFQRDGANLRCEVPISITKAALGGEVEVPTLDGRVNLRIPAGAQSGKVFRVRGKGVKPVRGGPQGDLLCRVHVETPVNLTKKQKELLEEFGRTMDDTGDKHTPRTSSWLDKARKFFEDWKL.

The 66-residue stretch at Asp-5–Gly-70 folds into the J domain. Residues Gly-139–Gln-217 form a CR-type zinc finger. Zn(2+) is bound by residues Cys-152, Cys-155, Cys-169, Cys-172, Cys-191, Cys-194, Cys-205, and Cys-208. CXXCXGXG motif repeat units follow at residues Cys-152–Gly-159, Cys-169–Gly-176, Cys-191–Gly-198, and Cys-205–Gly-212. The tract at residues Thr-230–Pro-249 is disordered.

Belongs to the DnaJ family. Homodimer. It depends on Zn(2+) as a cofactor.

It is found in the cytoplasm. Its function is as follows. Participates actively in the response to hyperosmotic and heat shock by preventing the aggregation of stress-denatured proteins and by disaggregating proteins, also in an autonomous, DnaK-independent fashion. Unfolded proteins bind initially to DnaJ; upon interaction with the DnaJ-bound protein, DnaK hydrolyzes its bound ATP, resulting in the formation of a stable complex. GrpE releases ADP from DnaK; ATP binding to DnaK triggers the release of the substrate protein, thus completing the reaction cycle. Several rounds of ATP-dependent interactions between DnaJ, DnaK and GrpE are required for fully efficient folding. Also involved, together with DnaK and GrpE, in the DNA replication of plasmids through activation of initiation proteins. This chain is Chaperone protein DnaJ, found in Alkalilimnicola ehrlichii (strain ATCC BAA-1101 / DSM 17681 / MLHE-1).